Here is a 616-residue protein sequence, read N- to C-terminus: Dihydroxy-acid dehydratase (616 aa).

Aspartate 81 is a Mg(2+) binding site. Cysteine 122 serves as a coordination point for [2Fe-2S] cluster. Aspartate 123 and lysine 124 together coordinate Mg(2+). The residue at position 124 (lysine 124) is an N6-carboxylysine. Cysteine 195 contributes to the [2Fe-2S] cluster binding site. Glutamate 491 contributes to the Mg(2+) binding site. Serine 517 acts as the Proton acceptor in catalysis.

This sequence belongs to the IlvD/Edd family. In terms of assembly, homodimer. [2Fe-2S] cluster serves as cofactor. Requires Mg(2+) as cofactor.

It carries out the reaction (2R)-2,3-dihydroxy-3-methylbutanoate = 3-methyl-2-oxobutanoate + H2O. It catalyses the reaction (2R,3R)-2,3-dihydroxy-3-methylpentanoate = (S)-3-methyl-2-oxopentanoate + H2O. Its pathway is amino-acid biosynthesis; L-isoleucine biosynthesis; L-isoleucine from 2-oxobutanoate: step 3/4. The protein operates within amino-acid biosynthesis; L-valine biosynthesis; L-valine from pyruvate: step 3/4. Functionally, functions in the biosynthesis of branched-chain amino acids. Catalyzes the dehydration of (2R,3R)-2,3-dihydroxy-3-methylpentanoate (2,3-dihydroxy-3-methylvalerate) into 2-oxo-3-methylpentanoate (2-oxo-3-methylvalerate) and of (2R)-2,3-dihydroxy-3-methylbutanoate (2,3-dihydroxyisovalerate) into 2-oxo-3-methylbutanoate (2-oxoisovalerate), the penultimate precursor to L-isoleucine and L-valine, respectively. The protein is Dihydroxy-acid dehydratase of Sodalis glossinidius (strain morsitans).